The primary structure comprises 135 residues: MTVNIYGASCSSTRKARQWFKKHGIAYKERNILRQPLTINELQEILRMTVEGTDEIISTRSKIFKELNLNLDELPLQKLLELIHEHPRLLKSPILMDEKRFQVGYHEDDIRQFLPRKTREHLWLQWKLDLGLVKG.

The active site involves cysteine 10.

The protein belongs to the ArsC family. Spx subfamily. Interacts with the C-terminal domain of the alpha subunit of the RNAP.

It is found in the cytoplasm. In terms of biological role, global transcriptional regulator that plays a key role in stress response and exerts either positive or negative regulation of genes. Acts by interacting with the C-terminal domain of the alpha subunit of the RNA polymerase (RNAP). This interaction can enhance binding of RNAP to the promoter region of target genes and stimulate their transcription, or block interaction of RNAP with activator. This is Global transcriptional regulator Spx 2 from Oceanobacillus iheyensis (strain DSM 14371 / CIP 107618 / JCM 11309 / KCTC 3954 / HTE831).